Reading from the N-terminus, the 142-residue chain is Large ribosomal subunit protein uL16 (142 aa).

Belongs to the universal ribosomal protein uL16 family. In terms of assembly, part of the 50S ribosomal subunit.

In terms of biological role, binds 23S rRNA and is also seen to make contacts with the A and possibly P site tRNAs. This chain is Large ribosomal subunit protein uL16, found in Thermotoga maritima (strain ATCC 43589 / DSM 3109 / JCM 10099 / NBRC 100826 / MSB8).